The chain runs to 1976 residues: Protein TIC 214 (1976 aa).

Transmembrane regions (helical) follow at residues 11 to 31 (LLLLWINIVNSVVMVGLYYGF), 64 to 84 (FIMGQFIVFISTYYPPLHLAL), 87 to 107 (PHTLTVLVIPYLLSHFWFFWN), 126 to 146 (LSIQYVFLNNLIFQLFNHFVL), 173 to 193 (FFGWLIGHMLLMKCIGLVLSW), and 221 to 241 (IFSILLFIICICYLGRMPSPI). Over residues 619–635 (FEEEEEEEEEDDQEEST) the composition is skewed to acidic residues. 2 disordered regions span residues 619-642 (FEEEEEEEEEDDQEESTDDHGIRS) and 830-861 (SSYVGEGAKEKEKIEEEHEEEKGEYKRKEDKR). Residues 836 to 861 (GAKEKEKIEEEHEEEKGEYKRKEDKR) are compositionally biased toward basic and acidic residues. 2 helical membrane passes run 1054–1074 (IIKIVLFIKIKVKEVFFFFVL) and 1202–1222 (IYMSILLCITNIYRIYVQFFL). Residues 1633-1665 (QKERFHPKPKVESNQKGYLELENRNRDEKERQH) show a composition bias toward basic and acidic residues. The tract at residues 1633-1669 (QKERFHPKPKVESNQKGYLELENRNRDEKERQHQGNL) is disordered.

The protein belongs to the TIC214 family. In terms of assembly, part of the Tic complex.

It localises to the plastid. It is found in the chloroplast inner membrane. Functionally, involved in protein precursor import into chloroplasts. May be part of an intermediate translocation complex acting as a protein-conducting channel at the inner envelope. The chain is Protein TIC 214 from Nymphaea alba (White water-lily).